Reading from the N-terminus, the 95-residue chain is Large ribosomal subunit protein uL23 (95 aa).

The protein belongs to the universal ribosomal protein uL23 family. Part of the 50S ribosomal subunit. Contacts protein L29, and trigger factor when it is bound to the ribosome.

One of the early assembly proteins it binds 23S rRNA. One of the proteins that surrounds the polypeptide exit tunnel on the outside of the ribosome. Forms the main docking site for trigger factor binding to the ribosome. In Heliobacterium modesticaldum (strain ATCC 51547 / Ice1), this protein is Large ribosomal subunit protein uL23.